We begin with the raw amino-acid sequence, 476 residues long: Doublecortin domain-containing protein 2 (476 aa).

2 consecutive Doublecortin domains span residues 17–100 and 139–221; these read KSVL…LNYL and CTIF…LPYS. A disordered region spans residues 234-476; that stretch reads FGQKASSLPP…QQNKDYAAVA (243 aa). The segment covering 261–272 has biased composition (polar residues); sequence STVGSSDNSSPQ. Serine 270 carries the post-translational modification Phosphoserine. A compositionally biased stretch (basic and acidic residues) spans 279–289; the sequence is KKEDVNSEKLT. Residues 296 to 306 are compositionally biased toward polar residues; that stretch reads KLKNSQETIPN. A compositionally biased stretch (basic and acidic residues) spans 354 to 366; it reads EKANKDAEQKEDF. Over residues 415–426 the composition is skewed to low complexity; it reads ELQQVNNELQLV. The span at 446–455 shows a compositional bias: basic and acidic residues; it reads DPQRPPRPEV.

As to quaternary structure, interacts with DVL1, DVL2 and DVL3. As to expression, ubiquitously expressed. In brain, highly expressed in the entorhinal cortex, inferior temporal cortex, medial temporal cortex, hypothalamus, amygdala and hippocampus. Expressed in liver by cholangiocytes, the epithelial cells of the bile ducts (at protein level).

Its subcellular location is the cell projection. It localises to the cilium. The protein localises to the cytoplasm. The protein resides in the cytoskeleton. It is found in the cilium axoneme. Its subcellular location is the kinocilium. In terms of biological role, protein that plays a role in the inhibition of canonical Wnt signaling pathway. May be involved in neuronal migration during development of the cerebral neocortex. Involved in the control of ciliogenesis and ciliary length. This Homo sapiens (Human) protein is Doublecortin domain-containing protein 2 (DCDC2).